A 504-amino-acid polypeptide reads, in one-letter code: MSIKAEEISSIIKQQIENYQSELKVSDVGTVTYIGDGIARAHGLDNAMAGELLEFSNGVMGMAQNLETNDVGIIILGPYTEIREGDEVRRTGKIMEVPVGEALIGRVVNSLGQPVDGLGPIETTGTRPIEAVAPGVMQRQSVNEPLQTGIKAIDALVPIGRGQRELIIGDRQTGKTSVAIDTILNQADQDMICIYVAIGQKESTVRNAVETLRHHGALDYTIVVTAAASQPAPLLYLAPYAGVAMAEEFMYNGKHVLVVYDDLSKQAAAYRELSLLLRRPPGREAYPGDVFYLHSRLLERAAKLNDSLGGGSITALPFVETQAGDISAYIPTNVISITDGQIFLQSDLFFSGVRPAINAGLSVSRVGGSAQIKAMKTVAGTLRLDLAAYRELESFSQFGSDLDAATRAKLERGKRTVEVLKQDLHKPLKVEKQVLILYALVHKYLDDVPVHDVLRFESEMNTWFDHNHPELLEEIRTTKKLPDEAKLEAALKEFKNTFVPSEEK.

169-176 (GDRQTGKT) serves as a coordination point for ATP.

Belongs to the ATPase alpha/beta chains family. In terms of assembly, F-type ATPases have 2 components, CF(1) - the catalytic core - and CF(0) - the membrane proton channel. CF(1) has five subunits: alpha(3), beta(3), gamma(1), delta(1), epsilon(1). CF(0) has three main subunits: a(1), b(2) and c(9-12). The alpha and beta chains form an alternating ring which encloses part of the gamma chain. CF(1) is attached to CF(0) by a central stalk formed by the gamma and epsilon chains, while a peripheral stalk is formed by the delta and b chains.

It is found in the cell membrane. It catalyses the reaction ATP + H2O + 4 H(+)(in) = ADP + phosphate + 5 H(+)(out). In terms of biological role, produces ATP from ADP in the presence of a proton gradient across the membrane. The alpha chain is a regulatory subunit. The protein is ATP synthase subunit alpha 2 of Listeria monocytogenes serotype 4b (strain F2365).